We begin with the raw amino-acid sequence, 1035 residues long: FACT complex subunit SPT16 (1035 aa).

Residues F432 to G500 adopt a coiled-coil conformation. Disordered stretches follow at residues A491 to V520 and E920 to K1035. The span at K499–Q519 shows a compositional bias: polar residues. A compositionally biased stretch (acidic residues) spans P929–E985. Residues E986–L1006 show a composition bias toward basic and acidic residues.

It belongs to the peptidase M24 family. SPT16 subfamily. In terms of assembly, component of the FACT complex (also called the DUF complex), a stable heterodimer of ssrp1 and supt16h. May also be a component of a ck2-spt16-ssrp1 complex composed of ssrp1, supt16h, csnk2a1, csnk2a2 and csnk2b. The FACT complex may also interact with vcp.

It localises to the nucleus. It is found in the chromosome. Its function is as follows. Component of the FACT complex, a general chromatin factor that acts to reorganize nucleosomes. The FACT complex is involved in multiple processes that require DNA as a template such as mRNA elongation, DNA replication and DNA repair. During transcription elongation the FACT complex acts as a histone chaperone that both destabilizes and restores nucleosomal structure. It facilitates the passage of RNA polymerase II and transcription by promoting the dissociation of one histone H2A-H2B dimer from the nucleosome, then subsequently promotes the reestablishment of the nucleosome following the passage of RNA polymerase II. The sequence is that of FACT complex subunit SPT16 (supt16h) from Xenopus laevis (African clawed frog).